The primary structure comprises 152 residues: Protein Smg homolog (152 aa).

It belongs to the Smg family.

In Bordetella petrii (strain ATCC BAA-461 / DSM 12804 / CCUG 43448), this protein is Protein Smg homolog.